Reading from the N-terminus, the 221-residue chain is ATP phosphoribosyltransferase (221 aa).

Belongs to the ATP phosphoribosyltransferase family. Short subfamily. Heteromultimer composed of HisG and HisZ subunits.

The protein localises to the cytoplasm. The enzyme catalyses 1-(5-phospho-beta-D-ribosyl)-ATP + diphosphate = 5-phospho-alpha-D-ribose 1-diphosphate + ATP. It functions in the pathway amino-acid biosynthesis; L-histidine biosynthesis; L-histidine from 5-phospho-alpha-D-ribose 1-diphosphate: step 1/9. Its function is as follows. Catalyzes the condensation of ATP and 5-phosphoribose 1-diphosphate to form N'-(5'-phosphoribosyl)-ATP (PR-ATP). Has a crucial role in the pathway because the rate of histidine biosynthesis seems to be controlled primarily by regulation of HisG enzymatic activity. This chain is ATP phosphoribosyltransferase, found in Neisseria gonorrhoeae (strain ATCC 700825 / FA 1090).